The primary structure comprises 174 residues: ATP synthase subunit delta (174 aa).

This sequence belongs to the ATPase delta chain family. In terms of assembly, F-type ATPases have 2 components, F(1) - the catalytic core - and F(0) - the membrane proton channel. F(1) has five subunits: alpha(3), beta(3), gamma(1), delta(1), epsilon(1). F(0) has three main subunits: a(1), b(2) and c(10-14). The alpha and beta chains form an alternating ring which encloses part of the gamma chain. F(1) is attached to F(0) by a central stalk formed by the gamma and epsilon chains, while a peripheral stalk is formed by the delta and b chains.

Its subcellular location is the cell inner membrane. Functionally, f(1)F(0) ATP synthase produces ATP from ADP in the presence of a proton or sodium gradient. F-type ATPases consist of two structural domains, F(1) containing the extramembraneous catalytic core and F(0) containing the membrane proton channel, linked together by a central stalk and a peripheral stalk. During catalysis, ATP synthesis in the catalytic domain of F(1) is coupled via a rotary mechanism of the central stalk subunits to proton translocation. In terms of biological role, this protein is part of the stalk that links CF(0) to CF(1). It either transmits conformational changes from CF(0) to CF(1) or is implicated in proton conduction. This Francisella philomiragia subsp. philomiragia (strain ATCC 25017 / CCUG 19701 / FSC 153 / O#319-036) protein is ATP synthase subunit delta.